A 245-amino-acid chain; its full sequence is tRNA pseudouridine synthase A (245 aa).

Catalysis depends on Asp52, which acts as the Nucleophile. Residue Tyr110 participates in substrate binding.

This sequence belongs to the tRNA pseudouridine synthase TruA family. In terms of assembly, homodimer.

The catalysed reaction is uridine(38/39/40) in tRNA = pseudouridine(38/39/40) in tRNA. In terms of biological role, formation of pseudouridine at positions 38, 39 and 40 in the anticodon stem and loop of transfer RNAs. The chain is tRNA pseudouridine synthase A from Ruminiclostridium cellulolyticum (strain ATCC 35319 / DSM 5812 / JCM 6584 / H10) (Clostridium cellulolyticum).